The primary structure comprises 411 residues: Serpin A3-2 (411 aa).

Positions 1 to 24 (MRAERTSFLLALGLLVAGIRSVHC) are cleaved as a signal peptide. N-linked (GlcNAc...) asparagine glycans are attached at residues asparagine 100, asparagine 180, asparagine 230, and asparagine 264.

The protein belongs to the serpin family. In terms of assembly, homodimer.

It localises to the cytoplasmic vesicle. The protein resides in the secretory vesicle. Its subcellular location is the chromaffin granule. It is found in the secreted. In terms of biological role, serine protease inhibitor. The sequence is that of Serpin A3-2 from Bos taurus (Bovine).